The primary structure comprises 1154 residues: ATP-dependent helicase/deoxyribonuclease subunit B (1154 aa).

In terms of domain architecture, UvrD-like helicase ATP-binding spans 1–284 (MSVRFIIGRS…EQLRHNVRHK (284 aa)). 8-15 (GRSGSGKT) contacts ATP. One can recognise a UvrD-like helicase C-terminal domain in the interval 279–583 (HNVRHKHEEL…QFSLVPPATD (305 aa)). Cysteine 799, cysteine 1120, cysteine 1123, and cysteine 1129 together coordinate [4Fe-4S] cluster.

The protein belongs to the helicase family. AddB/RexB type 1 subfamily. In terms of assembly, heterodimer of AddA and AddB. Mg(2+) is required as a cofactor. [4Fe-4S] cluster serves as cofactor.

In terms of biological role, the heterodimer acts as both an ATP-dependent DNA helicase and an ATP-dependent, dual-direction single-stranded exonuclease. Recognizes the chi site generating a DNA molecule suitable for the initiation of homologous recombination. The AddB subunit has 5' -&gt; 3' nuclease activity but not helicase activity. The chain is ATP-dependent helicase/deoxyribonuclease subunit B from Anoxybacillus flavithermus (strain DSM 21510 / WK1).